We begin with the raw amino-acid sequence, 156 residues long: MNVIEGKLNLTGNERVAVIASRFNHLITDRLVEGARDSFVRHGGKDEHLDLILVPGAFELPFALEKVLAQGDYDGVCCLGAIIRGSTPHFDYVSAEATKGIANVTLKYGAAVTFGVLTTDNIEQAIERAGTKVGNKGFEAMTGLIEMMNLYKNIGA.

Residues Phe23, 57–59 (AFE), and 81–83 (AII) contribute to the 5-amino-6-(D-ribitylamino)uracil site. 86–87 (ST) lines the (2S)-2-hydroxy-3-oxobutyl phosphate pocket. His89 functions as the Proton donor in the catalytic mechanism. Residue Phe114 coordinates 5-amino-6-(D-ribitylamino)uracil. Arg128 provides a ligand contact to (2S)-2-hydroxy-3-oxobutyl phosphate.

Belongs to the DMRL synthase family.

The catalysed reaction is (2S)-2-hydroxy-3-oxobutyl phosphate + 5-amino-6-(D-ribitylamino)uracil = 6,7-dimethyl-8-(1-D-ribityl)lumazine + phosphate + 2 H2O + H(+). It participates in cofactor biosynthesis; riboflavin biosynthesis; riboflavin from 2-hydroxy-3-oxobutyl phosphate and 5-amino-6-(D-ribitylamino)uracil: step 1/2. Catalyzes the formation of 6,7-dimethyl-8-ribityllumazine by condensation of 5-amino-6-(D-ribitylamino)uracil with 3,4-dihydroxy-2-butanone 4-phosphate. This is the penultimate step in the biosynthesis of riboflavin. The chain is 6,7-dimethyl-8-ribityllumazine synthase from Wolinella succinogenes (strain ATCC 29543 / DSM 1740 / CCUG 13145 / JCM 31913 / LMG 7466 / NCTC 11488 / FDC 602W) (Vibrio succinogenes).